The primary structure comprises 534 residues: 2,3-bisphosphoglycerate-independent phosphoglycerate mutase (534 aa).

Mn(2+) contacts are provided by D15 and S65. Residue S65 is the Phosphoserine intermediate of the active site. Substrate is bound by residues H126, 156–157 (RD), R188, R194, 261–264 (RPDR), and K334. Mn(2+) is bound by residues D401, H405, D442, H443, and H460.

The protein belongs to the BPG-independent phosphoglycerate mutase family. Requires Mn(2+) as cofactor.

Its subcellular location is the plastid. The protein localises to the chloroplast. The catalysed reaction is (2R)-2-phosphoglycerate = (2R)-3-phosphoglycerate. It participates in carbohydrate degradation; glycolysis; pyruvate from D-glyceraldehyde 3-phosphate: step 3/5. Its function is as follows. Catalyzes the interconversion of 2-phosphoglycerate and 3-phosphoglycerate. The sequence is that of 2,3-bisphosphoglycerate-independent phosphoglycerate mutase from Pyropia yezoensis (Susabi-nori).